The sequence spans 507 residues: Flagellar hook-associated protein 1 (507 aa).

Belongs to the flagella basal body rod proteins family.

It localises to the secreted. The protein resides in the bacterial flagellum. This Bacillus subtilis (strain 168) protein is Flagellar hook-associated protein 1 (flgK).